The primary structure comprises 156 residues: Class I hydrophobin B (156 aa).

The N-terminal stretch at 1 to 18 (MQFTLSAVVLALAGFSAA) is a signal peptide. Cystine bridges form between C52/C130, C60/C124, C61/C101, and C131/C149.

This sequence belongs to the fungal hydrophobin family.

The protein resides in the secreted. Its subcellular location is the cell wall. Aerial growth, conidiation, and dispersal of filamentous fungi in the environment rely upon a capability of their secreting small amphipathic proteins called hydrophobins (HPBs) with low sequence identity. Class I can self-assemble into an outermost layer of rodlet bundles on aerial cell surfaces, conferring cellular hydrophobicity that supports fungal growth, development and dispersal; whereas Class II form highly ordered films at water-air interfaces through intermolecular interactions but contribute nothing to the rodlet structure. In P.expansum, hydrophobins contribute to germination, tolerance to cold stress and mycotoxins patulin and citrinin production. HfbA and HfbB are essential for fungal surface hydrophobicity. The protein is Class I hydrophobin B of Penicillium expansum (Blue mold rot fungus).